The following is a 230-amino-acid chain: Cytidylate kinase (230 aa).

Residue 12-20 (GPSGAGKGT) participates in ATP binding.

It belongs to the cytidylate kinase family. Type 1 subfamily.

Its subcellular location is the cytoplasm. The catalysed reaction is CMP + ATP = CDP + ADP. The enzyme catalyses dCMP + ATP = dCDP + ADP. The polypeptide is Cytidylate kinase (Shewanella oneidensis (strain ATCC 700550 / JCM 31522 / CIP 106686 / LMG 19005 / NCIMB 14063 / MR-1)).